Reading from the N-terminus, the 225-residue chain is Proteasome activator 28 (225 aa).

Belongs to the PA28 family. Homoheptamer. The homoheptamer associates with the 20S proteasome.

It localises to the nucleus. In terms of biological role, subunit of the 11S REG (also called PA28) proteasome regulator, a doughnut-shaped homoheptamer which associates with the proteasome. 11S REG-gamma activates preferentially the trypsin-like catalytic subunit of the proteasome. May also be involved in cell cycle regulation. In Dictyostelium discoideum (Social amoeba), this protein is Proteasome activator 28 (psmE3).